The sequence spans 150 residues: 3-dehydroquinate dehydratase (150 aa).

Tyr-26 functions as the Proton acceptor in the catalytic mechanism. Substrate is bound by residues Asn-77, His-83, and Asp-90. The active-site Proton donor is His-103. Substrate contacts are provided by residues 104-105 and Arg-114; that span reads IS.

It belongs to the type-II 3-dehydroquinase family. Homododecamer.

The enzyme catalyses 3-dehydroquinate = 3-dehydroshikimate + H2O. Its pathway is metabolic intermediate biosynthesis; chorismate biosynthesis; chorismate from D-erythrose 4-phosphate and phosphoenolpyruvate: step 3/7. Its function is as follows. Catalyzes a trans-dehydration via an enolate intermediate. The sequence is that of 3-dehydroquinate dehydratase from Buchnera aphidicola subsp. Acyrthosiphon pisum (strain 5A).